A 64-amino-acid polypeptide reads, in one-letter code: Large ribosomal subunit protein bL35 (64 aa).

This sequence belongs to the bacterial ribosomal protein bL35 family.

The protein is Large ribosomal subunit protein bL35 of Desulforudis audaxviator (strain MP104C).